Here is a 357-residue protein sequence, read N- to C-terminus: Non-structural protein NS2 (357 aa).

Disordered stretches follow at residues 162 to 199 and 228 to 268; these read QNER…AKEM and LDEK…KTHI. Composition is skewed to acidic residues over residues 230–243 and 250–260; these read EKDE…EDEE and DDDEQGEDASD.

It belongs to the orbivirus non-structural protein NS2 family.

Single-stranded RNA-binding protein. The sequence is that of Non-structural protein NS2 (Segment-8) from Antilocapra americana (Pronghorn).